The chain runs to 294 residues: UDP-3-O-acyl-N-acetylglucosamine deacetylase (294 aa).

Zn(2+) contacts are provided by His75, His232, and Asp236. His259 (proton donor) is an active-site residue.

The protein belongs to the LpxC family. Zn(2+) is required as a cofactor.

It carries out the reaction a UDP-3-O-[(3R)-3-hydroxyacyl]-N-acetyl-alpha-D-glucosamine + H2O = a UDP-3-O-[(3R)-3-hydroxyacyl]-alpha-D-glucosamine + acetate. It functions in the pathway glycolipid biosynthesis; lipid IV(A) biosynthesis; lipid IV(A) from (3R)-3-hydroxytetradecanoyl-[acyl-carrier-protein] and UDP-N-acetyl-alpha-D-glucosamine: step 2/6. Catalyzes the hydrolysis of UDP-3-O-myristoyl-N-acetylglucosamine to form UDP-3-O-myristoylglucosamine and acetate, the committed step in lipid A biosynthesis. The polypeptide is UDP-3-O-acyl-N-acetylglucosamine deacetylase (Campylobacter jejuni subsp. jejuni serotype O:2 (strain ATCC 700819 / NCTC 11168)).